The sequence spans 364 residues: DNA replication and repair protein RecF (364 aa).

ATP is bound at residue 30–37; that stretch reads GANGSGKT.

It belongs to the RecF family.

It is found in the cytoplasm. Its function is as follows. The RecF protein is involved in DNA metabolism; it is required for DNA replication and normal SOS inducibility. RecF binds preferentially to single-stranded, linear DNA. It also seems to bind ATP. The chain is DNA replication and repair protein RecF from Sodalis glossinidius.